Here is a 71-residue protein sequence, read N- to C-terminus: Beta-defensin 25 (71 aa).

An N-terminal signal peptide occupies residues 1–22 (MAKWILLIVALLVLSHVPPGST). 3 disulfide bridges follow: Cys-27–Cys-54, Cys-34–Cys-48, and Cys-38–Cys-55.

The protein belongs to the beta-defensin family.

The protein resides in the secreted. Functionally, has antibacterial activity. The sequence is that of Beta-defensin 25 (Defb25) from Mus musculus (Mouse).